The primary structure comprises 224 residues: Large ribosomal subunit protein uL16z (224 aa).

Belongs to the universal ribosomal protein uL16 family. As to quaternary structure, component of the small ribosomal subunit. Mature ribosomes consist of a small (40S) and a large (60S) subunit. The 40S subunit contains about 33 different proteins and 1 molecule of RNA (18S). The 60S subunit contains about 49 different proteins and 3 molecules of RNA (25S, 5.8S and 5S).

In Oryza sativa subsp. indica (Rice), this protein is Large ribosomal subunit protein uL16z (SC34).